The sequence spans 344 residues: Centromere protein L (344 aa).

A disordered region spans residues Met1–Gln32. Polar residues predominate over residues Leu20–Gln32.

This sequence belongs to the CENP-L/IML3 family. As to quaternary structure, component of the CENPA-HI complex, at least composed of CENPH, CENPI, CENPK, CENPL, CENPM, CENPO and CENPP.

It localises to the nucleus. It is found in the chromosome. The protein localises to the centromere. Component of the CENPA-HI complex, a centromeric complex involved in assembly of kinetochore proteins, mitotic progression and chromosome segregation. The chain is Centromere protein L (CENPL) from Gallus gallus (Chicken).